The sequence spans 185 residues: Probable NEDD8-conjugating enzyme Ubc12-like (185 aa).

The interval 8 to 29 is disordered; the sequence is KEKQREESQSNNGRGASTVKKQ. Positions 16-28 are enriched in polar residues; sequence QSNNGRGASTVKK. A UBC core domain is found at 31-176; that stretch reads AGELRLHKDI…VRRAMMGGQV (146 aa). Catalysis depends on cysteine 114, which acts as the Glycyl thioester intermediate.

This sequence belongs to the ubiquitin-conjugating enzyme family. UBC12 subfamily.

Its pathway is protein modification; protein neddylation. Functionally, accepts the ubiquitin-like protein NEDD8/RUB1 from the ECR1-AXR1 E1 complex and catalyzes its covalent attachment to other proteins. This Arabidopsis thaliana (Mouse-ear cress) protein is Probable NEDD8-conjugating enzyme Ubc12-like (RCE2).